Here is a 416-residue protein sequence, read N- to C-terminus: Lactose permease (416 aa).

At 1–13 (MYYLKNTNFWMFG) the chain is on the cytoplasmic side. Residues 14–34 (FFFFFYFFIMGAYFPFFPIWL) traverse the membrane as a helical segment. Topologically, residues 35–45 (HEVNHISKGDT) are periplasmic. The helical transmembrane segment at 46–66 (GIIFACISLFSLLFQPIFGLL) threads the bilayer. Over 67–75 (SDKLGLRKH) the chain is Cytoplasmic. The helical transmembrane segment at 76 to 96 (LLWVITGMLVMFAPFFIYVFG) threads the bilayer. A topological domain (periplasmic) is located at residue proline 97. Residues 98–118 (LLQVNILLGSIVGGIYLGFIY) form a helical membrane-spanning segment. The Cytoplasmic portion of the chain corresponds to 119–144 (NAGAPAIEAYIEKASRRSNFEFGRAR). Residues 145 to 165 (MFGCVGWALCASIAGIMFTIN) form a helical membrane-spanning segment. A topological domain (periplasmic) is located at residue asparagine 166. The helical transmembrane segment at 167 to 187 (QFVFWLGSGCAVILALLLLFS) threads the bilayer. The Cytoplasmic segment spans residues 188-211 (KTDVPSSAKVADAVGANNSAFSLK). Residues 212 to 232 (LALELFKQPKLWLISLYVVGV) traverse the membrane as a helical segment. Residues 233–262 (SCTYDVFDQQFANFFTSFFATGEQGTRVFG) are Periplasmic-facing. A helical transmembrane segment spans residues 263-283 (YVTTMGELLNASIMFFAPLIV). Residues 284 to 290 (NRIGGKN) are Cytoplasmic-facing. A helical membrane pass occupies residues 291–309 (ALLLAGTIMSVRIIGSHSH). The Periplasmic portion of the chain corresponds to 310–314 (TALEV). Residues 315-336 (VILKTLHMFEIPFLIVGCFKYI) form a helical membrane-spanning segment. Residues 337-347 (TSQFEVRFSAT) are Cytoplasmic-facing. Residues 348-368 (IYLVCFCFFKQLAMIFMSVLA) traverse the membrane as a helical segment. Topologically, residues 369-378 (GKMYESIGFQ) are periplasmic. The helical transmembrane segment at 379-399 (GAYLVLGIIRVSFTLISVFTL) threads the bilayer. Topologically, residues 400-416 (SGPGPFSLLRRRESVAL) are cytoplasmic.

It belongs to the major facilitator superfamily. Oligosaccharide:H(+) symporter (OHS) (TC 2.A.1.5) family.

It is found in the cell inner membrane. The enzyme catalyses lactose(in) + H(+)(in) = lactose(out) + H(+)(out). In terms of biological role, responsible for transport of beta-galactosides into the cell, with the concomitant import of a proton (symport system). This is Lactose permease (lacY) from Citrobacter freundii.